Reading from the N-terminus, the 245-residue chain is UDP-2,3-diacylglucosamine hydrolase (245 aa).

Mn(2+)-binding residues include aspartate 8, histidine 10, aspartate 41, asparagine 79, and histidine 114. Residue 79–80 (NR) coordinates substrate. Residues aspartate 122, serine 160, asparagine 164, lysine 167, and histidine 195 each contribute to the substrate site. Positions 195 and 197 each coordinate Mn(2+).

Belongs to the LpxH family. It depends on Mn(2+) as a cofactor.

It localises to the cell inner membrane. It carries out the reaction UDP-2-N,3-O-bis[(3R)-3-hydroxytetradecanoyl]-alpha-D-glucosamine + H2O = 2-N,3-O-bis[(3R)-3-hydroxytetradecanoyl]-alpha-D-glucosaminyl 1-phosphate + UMP + 2 H(+). It functions in the pathway glycolipid biosynthesis; lipid IV(A) biosynthesis; lipid IV(A) from (3R)-3-hydroxytetradecanoyl-[acyl-carrier-protein] and UDP-N-acetyl-alpha-D-glucosamine: step 4/6. Functionally, hydrolyzes the pyrophosphate bond of UDP-2,3-diacylglucosamine to yield 2,3-diacylglucosamine 1-phosphate (lipid X) and UMP by catalyzing the attack of water at the alpha-P atom. Involved in the biosynthesis of lipid A, a phosphorylated glycolipid that anchors the lipopolysaccharide to the outer membrane of the cell. This chain is UDP-2,3-diacylglucosamine hydrolase, found in Photobacterium profundum (strain SS9).